Here is a 319-residue protein sequence, read N- to C-terminus: Red chlorophyll catabolite reductase, chloroplastic (319 aa).

Residues 1-39 constitute a chloroplast transit peptide; it reads MAMIFCNTLYSSSSPSYLSPLTSKPSRFSKNLRPRAQFQ. Red chlorophyll catabolite contacts are provided by residues Glu-154 and 207–209; that span reads YVS. Positions 255 to 286 form a coiled coil; it reads LERCVKEEEEKIVVGEEERMELERRDKSFRRK. Asp-291 serves as a coordination point for red chlorophyll catabolite.

In terms of assembly, homodimer. Interacts with HCAR. Interacts with SGR1, NYC1, NOL, PPH, PAO and the LHCII complex. Part of a SGR1-CCE-LHCII complex, which acts in chlorophyll breakdown. As to expression, expressed in all tissues tested, including roots.

It localises to the plastid. Its subcellular location is the chloroplast stroma. The protein resides in the chloroplast thylakoid membrane. It catalyses the reaction primary fluorescent chlorophyll catabolite + 2 oxidized [2Fe-2S]-[ferredoxin] = red chlorophyll catabolite + 2 reduced [2Fe-2S]-[ferredoxin] + 3 H(+). It participates in porphyrin-containing compound metabolism; chlorophyll degradation. Catalyzes the key reaction of chlorophyll catabolism, porphyrin macrocycle cleavage of pheophorbide a (pheide a) to a primary fluorescent catabolite (pFCC). Works in a two-step reaction with pheophorbide a oxygenase (PaO) by reducing the C20/C1 double bond of the intermediate, RCC. Belongs to the chlorophyll catabolic enzymes (CCEs). The protein is Red chlorophyll catabolite reductase, chloroplastic of Arabidopsis thaliana (Mouse-ear cress).